The chain runs to 74 residues: MVSKSLIVLLLVSVLVSTFFTTEAYPASYDDDFDALDDLDGLDLDDLLDSEPADLVLLDMWANMLDSQDFEDFE.

Positions 1–24 (MVSKSLIVLLLVSVLVSTFFTTEA) are cleaved as a signal peptide.

This sequence belongs to the non-disulfide-bridged peptide (NDBP) superfamily. Long chain multifunctional peptide (group 2) family. In terms of tissue distribution, expressed by the venom gland.

The protein localises to the secreted. Functionally, may be an antimicrobial peptide. The sequence is that of Anionic peptide clone 9 from Tityus costatus (Brazilian scorpion).